The following is a 342-amino-acid chain: Phosphatidate cytidylyltransferase, mitochondrial (342 aa).

The protein belongs to the TAM41 family. Mg(2+) serves as cofactor. Requires Co(2+) as cofactor. Cu(2+) is required as a cofactor.

Its subcellular location is the mitochondrion inner membrane. The enzyme catalyses a 1,2-diacyl-sn-glycero-3-phosphate + CTP + H(+) = a CDP-1,2-diacyl-sn-glycerol + diphosphate. Its pathway is phospholipid metabolism; CDP-diacylglycerol biosynthesis; CDP-diacylglycerol from sn-glycerol 3-phosphate: step 3/3. Functionally, catalyzes the formation of CDP-diacylglycerol (CDP-DAG) from phosphatidic acid (PA) in the mitochondrial inner membrane. Required for the biosynthesis of the dimeric phospholipid cardiolipin, which stabilizes supercomplexes of the mitochondrial respiratory chain in the mitochondrial inner membrane. The chain is Phosphatidate cytidylyltransferase, mitochondrial from Drosophila melanogaster (Fruit fly).